A 270-amino-acid polypeptide reads, in one-letter code: Flavin-dependent thymidylate synthase (270 aa).

Positions 13-218 constitute a ThyX domain; sequence GFVRLVDQMG…PLAWAAFEEH (206 aa). Residues Ser-59, 82 to 84, and Glu-90 contribute to the FAD site; that span reads RHR. DUMP-binding positions include 79–82, 90–94, and Arg-157; these read QWFR and EISGR. Residues 82 to 92 carry the ThyX motif motif; the sequence is RHRTASVNEIS. Residues 173–175 and His-179 contribute to the FAD site; that span reads DLH. Arg-184 serves as a coordination point for dUMP. Arg-184 (involved in ionization of N3 of dUMP, leading to its activation) is an active-site residue.

Belongs to the thymidylate synthase ThyX family. In terms of assembly, homotetramer. Requires FAD as cofactor.

It catalyses the reaction dUMP + (6R)-5,10-methylene-5,6,7,8-tetrahydrofolate + NADPH + H(+) = dTMP + (6S)-5,6,7,8-tetrahydrofolate + NADP(+). The protein operates within pyrimidine metabolism; dTTP biosynthesis. Its function is as follows. Catalyzes the reductive methylation of 2'-deoxyuridine-5'-monophosphate (dUMP) to 2'-deoxythymidine-5'-monophosphate (dTMP) while utilizing 5,10-methylenetetrahydrofolate (mTHF) as the methyl donor, and NADPH and FADH(2) as the reductant. The protein is Flavin-dependent thymidylate synthase of Thermus thermophilus (strain ATCC 27634 / DSM 579 / HB8).